Here is a 245-residue protein sequence, read N- to C-terminus: tRNA pseudouridine synthase A (245 aa).

Residue Asp-52 is the Nucleophile of the active site. Position 112 (Tyr-112) interacts with substrate.

The protein belongs to the tRNA pseudouridine synthase TruA family. As to quaternary structure, homodimer.

The catalysed reaction is uridine(38/39/40) in tRNA = pseudouridine(38/39/40) in tRNA. In terms of biological role, formation of pseudouridine at positions 38, 39 and 40 in the anticodon stem and loop of transfer RNAs. In Dictyoglomus turgidum (strain DSM 6724 / Z-1310), this protein is tRNA pseudouridine synthase A.